Here is a 761-residue protein sequence, read N- to C-terminus: Probable beta-galactosidase 2 (761 aa).

Positions Met1–Gly23 are cleaved as a signal peptide. Residues Asn39 and Asn110 are each glycosylated (N-linked (GlcNAc...) asparagine). Glu195 (proton donor) is an active-site residue. An N-linked (GlcNAc...) asparagine glycan is attached at Asn206. Glu267 functions as the Nucleophile in the catalytic mechanism. 11 N-linked (GlcNAc...) asparagine glycosylation sites follow: Asn385, Asn405, Asn438, Asn501, Asn552, Asn553, Asn577, Asn592, Asn642, Asn690, and Asn696.

Belongs to the glycosyl hydrolase 35 family.

The enzyme catalyses Hydrolysis of terminal non-reducing beta-D-galactose residues in beta-D-galactosides.. Functionally, cleaves beta-linked terminal galactosyl residues from gangliosides, glycoproteins, and glycosaminoglycans. This is Probable beta-galactosidase 2 (glb2) from Dictyostelium discoideum (Social amoeba).